The following is a 258-amino-acid chain: uncharacterized protein (258 aa).

This is an uncharacterized protein from Bacillus sp. (strain OxB-1).